A 508-amino-acid chain; its full sequence is Cobyric acid synthase (508 aa).

The region spanning 249-451 is the GATase cobBQ-type domain; the sequence is EVDVAIINLP…IHGIFENSLF (203 aa). The Nucleophile role is filled by C330. H443 is an active-site residue.

The protein belongs to the CobB/CobQ family. CobQ subfamily.

It participates in cofactor biosynthesis; adenosylcobalamin biosynthesis. Functionally, catalyzes amidations at positions B, D, E, and G on adenosylcobyrinic A,C-diamide. NH(2) groups are provided by glutamine, and one molecule of ATP is hydrogenolyzed for each amidation. The protein is Cobyric acid synthase of Caldanaerobacter subterraneus subsp. tengcongensis (strain DSM 15242 / JCM 11007 / NBRC 100824 / MB4) (Thermoanaerobacter tengcongensis).